Consider the following 499-residue polypeptide: UDP-N-acetylmuramoylalanine--D-glutamate ligase (499 aa).

128–134 (GTNGKTT) is an ATP binding site.

It belongs to the MurCDEF family.

It is found in the cytoplasm. The catalysed reaction is UDP-N-acetyl-alpha-D-muramoyl-L-alanine + D-glutamate + ATP = UDP-N-acetyl-alpha-D-muramoyl-L-alanyl-D-glutamate + ADP + phosphate + H(+). Its pathway is cell wall biogenesis; peptidoglycan biosynthesis. Its function is as follows. Cell wall formation. Catalyzes the addition of glutamate to the nucleotide precursor UDP-N-acetylmuramoyl-L-alanine (UMA). This is UDP-N-acetylmuramoylalanine--D-glutamate ligase from Rhodococcus jostii (strain RHA1).